A 328-amino-acid chain; its full sequence is Ribosomal RNA large subunit methyltransferase F (328 aa).

The interval 1-31 (MTDTRKPPRKKPQRPAKPAAPREKATLHPRN) is disordered.

It belongs to the methyltransferase superfamily. METTL16/RlmF family.

It localises to the cytoplasm. The enzyme catalyses adenosine(1618) in 23S rRNA + S-adenosyl-L-methionine = N(6)-methyladenosine(1618) in 23S rRNA + S-adenosyl-L-homocysteine + H(+). In terms of biological role, specifically methylates the adenine in position 1618 of 23S rRNA. The chain is Ribosomal RNA large subunit methyltransferase F from Pseudomonas syringae pv. syringae (strain B728a).